The chain runs to 208 residues: LexA repressor (208 aa).

The H-T-H motif DNA-binding region spans 30-50 (VREIGKSVGLSSSSTVAAYLE). Residues Ser-129 and Lys-167 each act as for autocatalytic cleavage activity in the active site.

Belongs to the peptidase S24 family. As to quaternary structure, homodimer.

It catalyses the reaction Hydrolysis of Ala-|-Gly bond in repressor LexA.. Functionally, represses a number of genes involved in the response to DNA damage (SOS response), including recA and lexA. In the presence of single-stranded DNA, RecA interacts with LexA causing an autocatalytic cleavage which disrupts the DNA-binding part of LexA, leading to derepression of the SOS regulon and eventually DNA repair. In Lacticaseibacillus casei (strain BL23) (Lactobacillus casei), this protein is LexA repressor.